Here is a 551-residue protein sequence, read N- to C-terminus: Tetrachloroethene reductive dehalogenase (551 aa).

Residues 1-39 constitute a signal peptide (tat-type signal); that stretch reads MGEINRRNFLKVSILGAAAAAVASASAVKGMVSPLVADA. A 4Fe-4S ferredoxin-type 1 domain is found at 411 to 440; the sequence is PRKFGVREFCRLCKKCADACPAQAISHEKD. The [4Fe-4S] cluster site is built by cysteine 420, cysteine 423, cysteine 426, cysteine 430, cysteine 467, cysteine 478, cysteine 481, and cysteine 485. The 19-residue stretch at 478–496 folds into the 4Fe-4S ferredoxin-type 2 domain; sequence CSNCVAVCSWNKVETWNHD.

It belongs to the PceA family. [4Fe-4S] cluster serves as cofactor. The cofactor is corrinoid. Post-translationally, predicted to be exported by the Tat system. The position of the signal peptide cleavage has been experimentally proven.

Its subcellular location is the cytoplasm. It is found in the cell membrane. The protein localises to the secreted. It carries out the reaction trichloroethene + chloride + A + H(+) = tetrachloroethene + AH2. The enzyme catalyses trichloroethene + AH2 = (Z)-1,2-dichloroethene + chloride + A + H(+). PceT is required as a chaperone for prePceA maturation. In the absence or presence of exogenous vitamin B12, the intracellular corrinoid level decreases in fumarate-grown cells and the PceA precursor forms catalytically inactive, corrinoid-free multiprotein aggregates. Exogenous vitamin B12 is not incorporated into the PceA precursor, even though it affects the transposition of the pce gene cluster. In terms of biological role, catalyzes the reductive dechlorination of tetrachloroethene (PCE) to trichloroethene (TCE) and of trichloroethene to cis-1,2-dichloroethene (DCE). Can also use various chlorinated ethanes such as tetrachloroethane, pentachloroethane and hexachloroethane. Reduced methyl viologen can act as the artificial electron donor. This Desulfitobacterium hafniense (strain Y51) protein is Tetrachloroethene reductive dehalogenase.